Here is a 32-residue protein sequence, read N- to C-terminus: Delta-conotoxin-like CnVIB (32 aa).

Disulfide bonds link Cys3–Cys18, Cys10–Cys22, and Cys17–Cys27. 4-hydroxyproline occurs at positions 6 and 14.

The protein belongs to the conotoxin O1 superfamily. Expressed by the venom duct.

It localises to the secreted. Its function is as follows. Delta-conotoxins bind to site 6 of voltage-gated sodium channels (Nav) and inhibit the inactivation process. This toxin acts on Nav1.4/SCN4A and Nav1.6/SCN8A (EC(50)=2.3 uM). The chain is Delta-conotoxin-like CnVIB from Conus consors (Singed cone).